A 102-amino-acid chain; its full sequence is Small ribosomal subunit protein eS24 (102 aa).

It belongs to the eukaryotic ribosomal protein eS24 family.

In Methanococcoides burtonii (strain DSM 6242 / NBRC 107633 / OCM 468 / ACE-M), this protein is Small ribosomal subunit protein eS24.